We begin with the raw amino-acid sequence, 367 residues long: tRNA-specific 2-thiouridylase MnmA (367 aa).

Residues 13-20 (GLSGGVDS) and methionine 39 contribute to the ATP site. Positions 99-101 (NPD) are interaction with target base in tRNA. Cysteine 104 acts as the Nucleophile in catalysis. Cysteine 104 and cysteine 200 are joined by a disulfide. An ATP-binding site is contributed by glycine 128. Residues 150–152 (KDQ) form an interaction with tRNA region. Catalysis depends on cysteine 200, which acts as the Cysteine persulfide intermediate. The interval 307-308 (RY) is interaction with tRNA.

It belongs to the MnmA/TRMU family.

Its subcellular location is the cytoplasm. The catalysed reaction is S-sulfanyl-L-cysteinyl-[protein] + uridine(34) in tRNA + AH2 + ATP = 2-thiouridine(34) in tRNA + L-cysteinyl-[protein] + A + AMP + diphosphate + H(+). Catalyzes the 2-thiolation of uridine at the wobble position (U34) of tRNA, leading to the formation of s(2)U34. The protein is tRNA-specific 2-thiouridylase MnmA of Neisseria meningitidis serogroup B (strain ATCC BAA-335 / MC58).